A 280-amino-acid chain; its full sequence is Small ribosomal subunit protein uS2 (280 aa).

This sequence belongs to the universal ribosomal protein uS2 family.

The polypeptide is Small ribosomal subunit protein uS2 (Desulforapulum autotrophicum (strain ATCC 43914 / DSM 3382 / VKM B-1955 / HRM2) (Desulfobacterium autotrophicum)).